Consider the following 78-residue polypeptide: Large ribosomal subunit protein bL28 (78 aa).

The disordered stretch occupies residues 1-33 (MARKDDVTGEGPVTGNSVSDSNQKTNRRFKRNL). Polar residues predominate over residues 14-24 (TGNSVSDSNQK).

The protein belongs to the bacterial ribosomal protein bL28 family.

This is Large ribosomal subunit protein bL28 from Salinibacter ruber (strain DSM 13855 / M31).